Reading from the N-terminus, the 51-residue chain is Methionine aminopeptidase (51 aa).

This sequence belongs to the peptidase M24A family. Methionine aminopeptidase type 1 subfamily. In terms of assembly, monomer. Co(2+) serves as cofactor. It depends on Zn(2+) as a cofactor. Mn(2+) is required as a cofactor. The cofactor is Fe(2+).

The enzyme catalyses Release of N-terminal amino acids, preferentially methionine, from peptides and arylamides.. Removes the N-terminal methionine from nascent proteins. The N-terminal methionine is often cleaved when the second residue in the primary sequence is small and uncharged (Met-Ala-, Cys, Gly, Pro, Ser, Thr, or Val). Requires deformylation of the N(alpha)-formylated initiator methionine before it can be hydrolyzed. This chain is Methionine aminopeptidase (map), found in Geobacillus stearothermophilus (Bacillus stearothermophilus).